The sequence spans 124 residues: Conotoxin Im14.2 (124 aa).

An N-terminal signal peptide occupies residues Met-1–Gly-20. Positions Ile-21–Lys-99 are excised as a propeptide.

Contain 2 disulfide bonds. In terms of tissue distribution, expressed by the venom duct.

Its subcellular location is the secreted. Functionally, probable neurotoxin. The protein is Conotoxin Im14.2 of Conus imperialis (Imperial cone).